Here is a 368-residue protein sequence, read N- to C-terminus: WAT1-related protein At5g40240 (368 aa).

Transmembrane regions (helical) follow at residues 18–38 (VVPFAAMFAVECATVGSNTLF), 50–70 (VFVFYSYIVSTLLLLPLSVIF), 82–102 (PLFFKIFLLGLVGFMSQIAGC), 111–131 (TLASAISNLTPAFTFTLAVIF), 142–162 (ATQAKIIGAILSISGALVVVL), 194–214 (WIIGGLLLASQYFLISVWYIL), 226–246 (ITVVFFYNLFATLISVPVCLF), 260–280 (ISLAAIIYSGVFVSLFSALTH), 292–312 (ISLFRPLSIAIAVAMGAIFLG), and 315–335 (LHLGSVIGSMILCIGFYTVIW). 2 EamA domains span residues 33–161 (GSNT…LVVV) and 208–334 (ISVW…YTVI).

The protein belongs to the drug/metabolite transporter (DMT) superfamily. Plant drug/metabolite exporter (P-DME) (TC 2.A.7.4) family.

It is found in the membrane. The polypeptide is WAT1-related protein At5g40240 (Arabidopsis thaliana (Mouse-ear cress)).